The chain runs to 418 residues: Phosphopentomutase (418 aa).

Residues aspartate 10, aspartate 297, histidine 302, aspartate 338, histidine 339, and histidine 350 each contribute to the Mn(2+) site.

This sequence belongs to the phosphopentomutase family. Mn(2+) is required as a cofactor.

The protein resides in the cytoplasm. The enzyme catalyses 2-deoxy-alpha-D-ribose 1-phosphate = 2-deoxy-D-ribose 5-phosphate. It carries out the reaction alpha-D-ribose 1-phosphate = D-ribose 5-phosphate. The protein operates within carbohydrate degradation; 2-deoxy-D-ribose 1-phosphate degradation; D-glyceraldehyde 3-phosphate and acetaldehyde from 2-deoxy-alpha-D-ribose 1-phosphate: step 1/2. Isomerase that catalyzes the conversion of deoxy-ribose 1-phosphate (dRib-1-P) and ribose 1-phosphate (Rib-1-P) to deoxy-ribose 5-phosphate (dRib-5-P) and ribose 5-phosphate (Rib-5-P), respectively. In Chromohalobacter salexigens (strain ATCC BAA-138 / DSM 3043 / CIP 106854 / NCIMB 13768 / 1H11), this protein is Phosphopentomutase.